We begin with the raw amino-acid sequence, 68 residues long: Protein DsrB (68 aa).

Belongs to the DsrB family.

In Sodalis glossinidius (strain morsitans), this protein is Protein DsrB.